We begin with the raw amino-acid sequence, 804 residues long: Leucine--tRNA ligase (804 aa).

The 'HIGH' region motif lies at 40–51 (PYPSGAGLHVGH). The 'KMSKS' region motif lies at 576-580 (KMSKS). Lysine 579 contributes to the ATP binding site.

The protein belongs to the class-I aminoacyl-tRNA synthetase family.

It localises to the cytoplasm. The enzyme catalyses tRNA(Leu) + L-leucine + ATP = L-leucyl-tRNA(Leu) + AMP + diphosphate. This Bacillus velezensis (strain DSM 23117 / BGSC 10A6 / LMG 26770 / FZB42) (Bacillus amyloliquefaciens subsp. plantarum) protein is Leucine--tRNA ligase.